A 307-amino-acid chain; its full sequence is Glycine--tRNA ligase alpha subunit (307 aa).

It belongs to the class-II aminoacyl-tRNA synthetase family. As to quaternary structure, tetramer of two alpha and two beta subunits.

The protein localises to the cytoplasm. The enzyme catalyses tRNA(Gly) + glycine + ATP = glycyl-tRNA(Gly) + AMP + diphosphate. This is Glycine--tRNA ligase alpha subunit (glyQ) from Xylella fastidiosa (strain 9a5c).